Here is a 152-residue protein sequence, read N- to C-terminus: Large ribosomal subunit protein uL15 (152 aa).

Residues 18–37 (RVARGIGSGKGKTAGRGVKG) are disordered. A compositionally biased stretch (gly residues) spans 23–35 (IGSGKGKTAGRGV).

This sequence belongs to the universal ribosomal protein uL15 family. As to quaternary structure, part of the 50S ribosomal subunit.

In terms of biological role, binds to the 23S rRNA. The chain is Large ribosomal subunit protein uL15 from Rickettsia bellii (strain OSU 85-389).